Here is a 758-residue protein sequence, read N- to C-terminus: POU domain, class 2, transcription factor 1 (758 aa).

Polar residues-rich tracts occupy residues 1–10 (MKLHSSSKIQ), 19–30 (RMNNPSETSKSP), and 275–285 (VQQLPQSQTTP). Disordered regions lie at residues 1–43 (MKLH…QTNG), 271–296 (AATP…LEEP), 377–398 (TNQS…RRKK), 450–472 (EKRI…LFSS), and 534–573 (SVLT…MTSS). One can recognise a POU-specific domain in the interval 294–368 (EEPSDLEELE…LLEKWLNDAE (75 aa)). The homeobox DNA-binding region spans 395 to 454 (RRKKRTSIETNIRVALEKSFLENQKPTSEEITMIADQLNMEKEVIRVWFCNRRQKEKRIN). Positions 455–472 (PPSSGGSSSSPIKSLFSS) are enriched in low complexity.

It belongs to the POU transcription factor family. Class-2 subfamily. In terms of tissue distribution, expressed in oocytes (at protein level). Expressed in the tadpole brain (at protein level).

The protein localises to the cytoplasm. It localises to the nucleus. Transcription factor that binds to the octamer motif (5'-ATTTGCAT-3') and activates the promoters of the genes of some small nuclear RNAs (snRNA) and histone H2B. In vitro does not bind to variant octamer sequences, such as the H2B octamer 5'-GTTTGCAT-3', although binding has been observed in vivo during early embryogenesis, suggesting that interactions between pou2f1 and other factors might be required for octamer-dependent H2B transcription. Acts downstream of Notch signaling during radial glia formation. May be important for gastrulation, possibly through the regulation of an FGF-type signaling pathway. The protein is POU domain, class 2, transcription factor 1 (pou2f1) of Xenopus laevis (African clawed frog).